The chain runs to 89 residues: MALTQTKKQELISQYQAHETDTGSSELQVAFLTERINQLTEHLKANPKDHASRRGLLQMIGRRRGLLTYIQKKDQQRYQTLIGRLGIRR.

The segment at 1–24 (MALTQTKKQELISQYQAHETDTGS) is disordered.

It belongs to the universal ribosomal protein uS15 family. In terms of assembly, part of the 30S ribosomal subunit. Forms a bridge to the 50S subunit in the 70S ribosome, contacting the 23S rRNA.

Functionally, one of the primary rRNA binding proteins, it binds directly to 16S rRNA where it helps nucleate assembly of the platform of the 30S subunit by binding and bridging several RNA helices of the 16S rRNA. Its function is as follows. Forms an intersubunit bridge (bridge B4) with the 23S rRNA of the 50S subunit in the ribosome. The sequence is that of Small ribosomal subunit protein uS15 from Microcystis aeruginosa (strain NIES-843 / IAM M-2473).